A 442-amino-acid chain; its full sequence is Cytokine receptor-like factor 3 (442 aa).

At M1 the chain carries N-acetylmethionine. A coiled-coil region spans residues 10–57 (ELLLQEARENVEAAQSYRRELGHRLEGLREARRQIKESASQTRDVLKQ). Positions 181–274 (PPVQIEELIE…PQIGHSTLVP (94 aa)) constitute a Fibronectin type-III domain.

This sequence belongs to the cytokine receptor-like factor 3 family. Expressed in several embryonic and adult tissues, including adult and fetal brain, liver, spleen and pancreas. Expressed in adult, but not fetal kidney. Expressed in skin and squamous cell carcinoma (SCC) and in several other cancer types. Also detected in lesion actinic keratosis (AK).

The protein resides in the cytoplasm. Its function is as follows. May play a role in the negative regulation of cell cycle progression. This chain is Cytokine receptor-like factor 3 (CRLF3), found in Homo sapiens (Human).